The primary structure comprises 641 residues: Soluble starch synthase 1, chloroplastic/amyloplastic (641 aa).

Lys-145 lines the ADP-alpha-D-glucose pocket.

It belongs to the glycosyltransferase 1 family. Bacterial/plant glycogen synthase subfamily. In terms of tissue distribution, high expression in leaves and very low in tubers.

The protein resides in the plastid. It is found in the chloroplast. Its subcellular location is the amyloplast. It carries out the reaction [(1-&gt;4)-alpha-D-glucosyl](n) + ADP-alpha-D-glucose = [(1-&gt;4)-alpha-D-glucosyl](n+1) + ADP + H(+). Its pathway is glycan biosynthesis; starch biosynthesis. Functionally, plays a minor role in starch synthesis in storage organs (tubers), but may contribute to the deposition of transient starch in chloroplasts of leaves. The sequence is that of Soluble starch synthase 1, chloroplastic/amyloplastic from Solanum tuberosum (Potato).